The primary structure comprises 217 residues: Non-structural protein NS3 (217 aa).

The protein belongs to the orbivirus NS3 family.

Functionally, may play a role in the release of virions from infected cells. The protein is Non-structural protein NS3 (Segment-10) of Camelus dromedarius (Dromedary).